The following is a 270-amino-acid chain: Sorting nexin-11 (270 aa).

Residues 16-132 form the PX domain; it reads VITVRVQDPR…HLFLQSQLSV (117 aa). Residues R59, K85, and R99 each contribute to the a 1,2-diacyl-sn-glycero-3-phospho-(1D-myo-inositol-3-phosphate) site. Residues 135-139 form an important for membrane trafficking region; it reads IEACV. Residues 168 to 177 show a composition bias toward basic and acidic residues; sequence GSSHLAEGDQ. 2 disordered regions span residues 168 to 244 and 251 to 270; these read GSSH…LSAS and LGGGHAVPLDPGQLETVLEK. Positions 218-227 are enriched in pro residues; sequence LESPTLPPTS.

The protein belongs to the sorting nexin family. In terms of assembly, monomer. Interacts with TRPV3; this interaction promotes TRPV3 trafficking from the cell membrane to lysosome for degradation.

The protein resides in the cell membrane. It localises to the endosome. It is found in the cytoplasm. Its function is as follows. Phosphoinositide-binding protein involved in protein sorting and membrane trafficking in endosomes. Regulates the levels of TRPV3 by promoting its trafficking from the cell membrane to lysosome for degradation. This is Sorting nexin-11 (SNX11) from Bos taurus (Bovine).